The sequence spans 865 residues: Eukaryotic translation initiation factor 3 subunit C (865 aa).

Disordered stretches follow at residues 1–92 and 206–243; these read MSRF…AKDK and EDEEEPAPKPKKAAKVSFDEATAEDEEDDEGFARVGKG. 2 stretches are compositionally biased toward acidic residues: residues 16–54 and 69–80; these read SSDEEELYSEEEEEELEDEGDDSDNDGSGDDDSDSDSDA and DDDSSDEEDSDA. Basic and acidic residues predominate over residues 82–92; that stretch reads VTTKVKSAKDK. The segment covering 226 to 235 has biased composition (acidic residues); sequence ATAEDEEDDE. The 175-residue stretch at 606–780 folds into the PCI domain; that stretch reads FHMHINLELL…QTVIFRKGVE (175 aa). A disordered region spans residues 801–865; sequence SNERTLEQRT…GGALGAAVRA (65 aa). Polar residues predominate over residues 808–817; that stretch reads QRTQGTSNAF. Residues 822–841 are compositionally biased toward gly residues; the sequence is GRGGRGGGRGRGGGRGGPRF.

It belongs to the eIF-3 subunit C family. Component of the eukaryotic translation initiation factor 3 (eIF-3) complex.

It localises to the cytoplasm. In terms of biological role, component of the eukaryotic translation initiation factor 3 (eIF-3) complex, which is involved in protein synthesis of a specialized repertoire of mRNAs and, together with other initiation factors, stimulates binding of mRNA and methionyl-tRNAi to the 40S ribosome. The eIF-3 complex specifically targets and initiates translation of a subset of mRNAs involved in cell proliferation. The polypeptide is Eukaryotic translation initiation factor 3 subunit C (Pyricularia oryzae (strain 70-15 / ATCC MYA-4617 / FGSC 8958) (Rice blast fungus)).